The chain runs to 151 residues: MTSLLLFGAGGLFDFDATLPLMALQVVLLTFILNALFFRPVGRVVEEREVYVTTSRAEAKQKLAEAEKLELELKEQLKSARIAAQQLIQEAEKDSEQLYREALAIANADANAAREKARREIDAQRDSALTQLKGDAEKLGDLIVNRLLAAK.

A helical membrane pass occupies residues 18–38 (TLPLMALQVVLLTFILNALFF).

Belongs to the ATPase B chain family. F-type ATPases have 2 components, F(1) - the catalytic core - and F(0) - the membrane proton channel. F(1) has five subunits: alpha(3), beta(3), gamma(1), delta(1), epsilon(1). F(0) has four main subunits: a(1), b(1), b'(1) and c(10-14). The alpha and beta chains form an alternating ring which encloses part of the gamma chain. F(1) is attached to F(0) by a central stalk formed by the gamma and epsilon chains, while a peripheral stalk is formed by the delta, b and b' chains.

The protein resides in the cellular thylakoid membrane. In terms of biological role, f(1)F(0) ATP synthase produces ATP from ADP in the presence of a proton or sodium gradient. F-type ATPases consist of two structural domains, F(1) containing the extramembraneous catalytic core and F(0) containing the membrane proton channel, linked together by a central stalk and a peripheral stalk. During catalysis, ATP synthesis in the catalytic domain of F(1) is coupled via a rotary mechanism of the central stalk subunits to proton translocation. Component of the F(0) channel, it forms part of the peripheral stalk, linking F(1) to F(0). The b'-subunit is a diverged and duplicated form of b found in plants and photosynthetic bacteria. This is ATP synthase subunit b' from Prochlorococcus marinus (strain MIT 9303).